A 253-amino-acid polypeptide reads, in one-letter code: Triosephosphate isomerase (253 aa).

Positions 12 and 14 each coordinate substrate. Histidine 96 (electrophile) is an active-site residue. The Proton acceptor role is filled by glutamate 169.

This sequence belongs to the triosephosphate isomerase family. Homodimer.

The protein resides in the cytoplasm. It catalyses the reaction D-glyceraldehyde 3-phosphate = dihydroxyacetone phosphate. It functions in the pathway carbohydrate biosynthesis; gluconeogenesis. The protein operates within carbohydrate degradation; glycolysis; D-glyceraldehyde 3-phosphate from glycerone phosphate: step 1/1. Its function is as follows. Antigen to the host M.1 monoclonal antibody. The protein is Triosephosphate isomerase (TPI) of Schistosoma mansoni (Blood fluke).